The primary structure comprises 138 residues: ATP synthase epsilon chain (138 aa).

It belongs to the ATPase epsilon chain family. As to quaternary structure, F-type ATPases have 2 components, CF(1) - the catalytic core - and CF(0) - the membrane proton channel. CF(1) has five subunits: alpha(3), beta(3), gamma(1), delta(1), epsilon(1). CF(0) has three main subunits: a, b and c.

The protein localises to the cell inner membrane. Functionally, produces ATP from ADP in the presence of a proton gradient across the membrane. This chain is ATP synthase epsilon chain, found in Trichlorobacter lovleyi (strain ATCC BAA-1151 / DSM 17278 / SZ) (Geobacter lovleyi).